Here is a 338-residue protein sequence, read N- to C-terminus: Fructose-1,6-bisphosphatase class 1 (338 aa).

Positions 92, 113, 115, and 116 each coordinate Mg(2+). Substrate-binding positions include aspartate 116–serine 119, asparagine 208, and lysine 274. Residue glutamate 280 participates in Mg(2+) binding.

It belongs to the FBPase class 1 family. In terms of assembly, homotetramer. Mg(2+) is required as a cofactor.

It localises to the cytoplasm. It catalyses the reaction beta-D-fructose 1,6-bisphosphate + H2O = beta-D-fructose 6-phosphate + phosphate. The protein operates within carbohydrate biosynthesis; gluconeogenesis. The protein is Fructose-1,6-bisphosphatase class 1 of Paramagnetospirillum magneticum (strain ATCC 700264 / AMB-1) (Magnetospirillum magneticum).